Consider the following 1749-residue polypeptide: Intraflagellar transport protein 172 homolog (1749 aa).

Residue methionine 1 is modified to N-acetylmethionine. Residue lysine 4 forms a Glycyl lysine isopeptide (Lys-Gly) (interchain with G-Cter in SUMO1) linkage. WD repeat units lie at residues 14 to 53 (DGAA…RDKF), 64 to 103 (RKSY…GDKK), 110 to 148 (IQTS…SSTI), 150 to 191 (GTES…ESQG), 195 to 233 (NHPC…QTFD), 238 to 278 (PQER…WEEA), 284 to 323 (TNLY…SIYK), 483 to 520 (SHES…CSKT), and 521 to 559 (MILN…ERVT). The stretch at 593-624 (DEGLIEFGTAIDDGNYIRATAFLETLEMTPET) is one TPR 1 repeat. Arginine 672 is modified (omega-N-methylarginine). TPR repeat units follow at residues 692–725 (EKNY…DECI), 809–842 (GELY…MKAV), 854–887 (VKLE…IKAI), 912–945 (SKYY…KDAI), 947–970 (MYTQ…PEDV), 971–1004 (SVLY…DLAI), 1042–1075 (EGRL…EEAY), 1142–1175 (PEVH…KEAV), 1276–1309 (VEGF…GNSG), 1345–1378 (IGKH…NKAK), 1411–1445 (GVDV…LHKY), 1447–1477 (ALYA…NPQN), and 1574–1607 (DKAF…TDAI).

This sequence belongs to the IFT172 family. In terms of assembly, interacts with IFT88. Interacts with IFT57. Interacts with RABL2/RABL2A; binds preferentially to GDP-bound RABL2.

It localises to the cell projection. The protein resides in the cilium. Functionally, required for the maintenance and formation of cilia. Plays an indirect role in hedgehog (Hh) signaling, cilia being required for all activity of the hedgehog pathway. The chain is Intraflagellar transport protein 172 homolog (IFT172) from Homo sapiens (Human).